We begin with the raw amino-acid sequence, 351 residues long: Homocitrate synthase (351 aa).

A Pyruvate carboxyltransferase domain is found at 23–272 (IKFCDTTLRD…KLPVDLDTTS (250 aa)).

It belongs to the alpha-IPM synthase/homocitrate synthase family.

The enzyme catalyses acetyl-CoA + 2-oxoglutarate + H2O = (2R)-homocitrate + CoA + H(+). This protein is a Fe-Mo-cofactor biosynthetic component. This chain is Homocitrate synthase (nifV), found in Frankia alni.